The following is a 215-amino-acid chain: N-(5'-phosphoribosyl)anthranilate isomerase (215 aa).

This sequence belongs to the TrpF family.

It catalyses the reaction N-(5-phospho-beta-D-ribosyl)anthranilate = 1-(2-carboxyphenylamino)-1-deoxy-D-ribulose 5-phosphate. The protein operates within amino-acid biosynthesis; L-tryptophan biosynthesis; L-tryptophan from chorismate: step 3/5. In Pelodictyon phaeoclathratiforme (strain DSM 5477 / BU-1), this protein is N-(5'-phosphoribosyl)anthranilate isomerase.